Here is a 480-residue protein sequence, read N- to C-terminus: Siroheme synthase (480 aa).

The precorrin-2 dehydrogenase /sirohydrochlorin ferrochelatase stretch occupies residues 1 to 203 (MNYFPIFANL…QQTAQAEQEL (203 aa)). NAD(+)-binding positions include 22-23 (SV) and 43-44 (NQ). Position 128 is a phosphoserine (serine 128). The uroporphyrinogen-III C-methyltransferase stretch occupies residues 214–480 (GFVSLVGAGP…GGLNAGQRAA (267 aa)). Proline 223 provides a ligand contact to S-adenosyl-L-methionine. Residue aspartate 246 is the Proton acceptor of the active site. The Proton donor role is filled by lysine 268. S-adenosyl-L-methionine contacts are provided by residues 299 to 301 (GGD), valine 304, 329 to 330 (TA), methionine 381, and glycine 410.

This sequence in the N-terminal section; belongs to the precorrin-2 dehydrogenase / sirohydrochlorin ferrochelatase family. It in the C-terminal section; belongs to the precorrin methyltransferase family.

It catalyses the reaction uroporphyrinogen III + 2 S-adenosyl-L-methionine = precorrin-2 + 2 S-adenosyl-L-homocysteine + H(+). The enzyme catalyses precorrin-2 + NAD(+) = sirohydrochlorin + NADH + 2 H(+). The catalysed reaction is siroheme + 2 H(+) = sirohydrochlorin + Fe(2+). It participates in cofactor biosynthesis; adenosylcobalamin biosynthesis; precorrin-2 from uroporphyrinogen III: step 1/1. It functions in the pathway cofactor biosynthesis; adenosylcobalamin biosynthesis; sirohydrochlorin from precorrin-2: step 1/1. Its pathway is porphyrin-containing compound metabolism; siroheme biosynthesis; precorrin-2 from uroporphyrinogen III: step 1/1. The protein operates within porphyrin-containing compound metabolism; siroheme biosynthesis; siroheme from sirohydrochlorin: step 1/1. It participates in porphyrin-containing compound metabolism; siroheme biosynthesis; sirohydrochlorin from precorrin-2: step 1/1. Its function is as follows. Multifunctional enzyme that catalyzes the SAM-dependent methylations of uroporphyrinogen III at position C-2 and C-7 to form precorrin-2 via precorrin-1. Then it catalyzes the NAD-dependent ring dehydrogenation of precorrin-2 to yield sirohydrochlorin. Finally, it catalyzes the ferrochelation of sirohydrochlorin to yield siroheme. The chain is Siroheme synthase from Neisseria meningitidis serogroup C (strain 053442).